The chain runs to 137 residues: Small ribosomal subunit protein uS8 (137 aa).

It belongs to the universal ribosomal protein uS8 family. In terms of assembly, part of the 30S ribosomal subunit. Contacts proteins S5 and S12.

Functionally, one of the primary rRNA binding proteins, it binds directly to 16S rRNA central domain where it helps coordinate assembly of the platform of the 30S subunit. In Metamycoplasma arthritidis (strain 158L3-1) (Mycoplasma arthritidis), this protein is Small ribosomal subunit protein uS8.